The chain runs to 193 residues: ATP synthase subunit delta (193 aa).

The protein belongs to the ATPase delta chain family. In terms of assembly, F-type ATPases have 2 components, F(1) - the catalytic core - and F(0) - the membrane proton channel. F(1) has five subunits: alpha(3), beta(3), gamma(1), delta(1), epsilon(1). F(0) has three main subunits: a(1), b(2) and c(10-14). The alpha and beta chains form an alternating ring which encloses part of the gamma chain. F(1) is attached to F(0) by a central stalk formed by the gamma and epsilon chains, while a peripheral stalk is formed by the delta and b chains.

The protein localises to the cell inner membrane. Its function is as follows. F(1)F(0) ATP synthase produces ATP from ADP in the presence of a proton or sodium gradient. F-type ATPases consist of two structural domains, F(1) containing the extramembraneous catalytic core and F(0) containing the membrane proton channel, linked together by a central stalk and a peripheral stalk. During catalysis, ATP synthesis in the catalytic domain of F(1) is coupled via a rotary mechanism of the central stalk subunits to proton translocation. Functionally, this protein is part of the stalk that links CF(0) to CF(1). It either transmits conformational changes from CF(0) to CF(1) or is implicated in proton conduction. This Allorhizobium ampelinum (strain ATCC BAA-846 / DSM 112012 / S4) (Agrobacterium vitis (strain S4)) protein is ATP synthase subunit delta.